A 634-amino-acid chain; its full sequence is Chaperone protein HtpG (634 aa).

An a; substrate-binding region spans residues 1–342 (MTVETDKQTL…SSDLSLNVSR (342 aa)). Residues 343 to 559 (EILQSGPVVD…QGDLGLQMRQ (217 aa)) are b. The interval 560–634 (LLEASGQAVP…LNKLLLELSA (75 aa)) is c.

Belongs to the heat shock protein 90 family. As to quaternary structure, homodimer.

The protein resides in the cytoplasm. In terms of biological role, molecular chaperone. Has ATPase activity. This Xanthomonas axonopodis pv. citri (strain 306) protein is Chaperone protein HtpG.